We begin with the raw amino-acid sequence, 226 residues long: Probable amino-acid ABC transporter permease protein YckA (226 aa).

An ABC transmembrane type-1 domain is found at 27–215 (IGYTLLISFV…AICSIAAVFQ (189 aa)). Helical transmembrane passes span 31–51 (LLIS…ISLA), 73–93 (VPIL…GIEF), 94–114 (SAVT…IAEI), 160–180 (VLLD…PELL), and 194–214 (MTMY…AAVF).

It belongs to the binding-protein-dependent transport system permease family. HisMQ subfamily.

The protein localises to the cell membrane. Functionally, part of a binding-protein-dependent transport system. Probably responsible for the translocation of the substrate across the membrane. This chain is Probable amino-acid ABC transporter permease protein YckA (yckA), found in Bacillus subtilis (strain 168).